A 264-amino-acid chain; its full sequence is 3-deoxy-manno-octulosonate cytidylyltransferase (264 aa).

Belongs to the KdsB family.

The protein localises to the cytoplasm. It carries out the reaction 3-deoxy-alpha-D-manno-oct-2-ulosonate + CTP = CMP-3-deoxy-beta-D-manno-octulosonate + diphosphate. Its pathway is nucleotide-sugar biosynthesis; CMP-3-deoxy-D-manno-octulosonate biosynthesis; CMP-3-deoxy-D-manno-octulosonate from 3-deoxy-D-manno-octulosonate and CTP: step 1/1. The protein operates within bacterial outer membrane biogenesis; lipopolysaccharide biosynthesis. Its function is as follows. Activates KDO (a required 8-carbon sugar) for incorporation into bacterial lipopolysaccharide in Gram-negative bacteria. The chain is 3-deoxy-manno-octulosonate cytidylyltransferase from Marinomonas sp. (strain MWYL1).